A 338-amino-acid chain; its full sequence is Lipoate-protein ligase A (338 aa).

Residues 29–216 enclose the BPL/LPL catalytic domain; the sequence is SPDQRVLFLW…AFFNYYDEKV (188 aa). Residues R71, 76-79, and K134 each bind ATP; that span reads GAVF. K134 is a binding site for (R)-lipoate.

The protein belongs to the LplA family. As to quaternary structure, monomer.

The protein localises to the cytoplasm. The catalysed reaction is L-lysyl-[lipoyl-carrier protein] + (R)-lipoate + ATP = N(6)-[(R)-lipoyl]-L-lysyl-[lipoyl-carrier protein] + AMP + diphosphate + H(+). The protein operates within protein modification; protein lipoylation via exogenous pathway; protein N(6)-(lipoyl)lysine from lipoate: step 1/2. Its pathway is protein modification; protein lipoylation via exogenous pathway; protein N(6)-(lipoyl)lysine from lipoate: step 2/2. In terms of biological role, catalyzes both the ATP-dependent activation of exogenously supplied lipoate to lipoyl-AMP and the transfer of the activated lipoyl onto the lipoyl domains of lipoate-dependent enzymes. The sequence is that of Lipoate-protein ligase A from Yersinia enterocolitica serotype O:8 / biotype 1B (strain NCTC 13174 / 8081).